The following is a 160-amino-acid chain: SsrA-binding protein (160 aa).

This sequence belongs to the SmpB family.

Its subcellular location is the cytoplasm. Required for rescue of stalled ribosomes mediated by trans-translation. Binds to transfer-messenger RNA (tmRNA), required for stable association of tmRNA with ribosomes. tmRNA and SmpB together mimic tRNA shape, replacing the anticodon stem-loop with SmpB. tmRNA is encoded by the ssrA gene; the 2 termini fold to resemble tRNA(Ala) and it encodes a 'tag peptide', a short internal open reading frame. During trans-translation Ala-aminoacylated tmRNA acts like a tRNA, entering the A-site of stalled ribosomes, displacing the stalled mRNA. The ribosome then switches to translate the ORF on the tmRNA; the nascent peptide is terminated with the 'tag peptide' encoded by the tmRNA and targeted for degradation. The ribosome is freed to recommence translation, which seems to be the essential function of trans-translation. In Nocardia farcinica (strain IFM 10152), this protein is SsrA-binding protein.